Here is a 249-residue protein sequence, read N- to C-terminus: Geranylgeranylglyceryl phosphate synthase (249 aa).

Aspartate 20 and serine 49 together coordinate Mg(2+). Residues 169–175, 200–201, and 222–223 each bind sn-glycerol 1-phosphate; these read YLDAGSG, GG, and GN.

It belongs to the GGGP/HepGP synthase family. Group II subfamily. As to quaternary structure, homohexamer. It depends on Mg(2+) as a cofactor.

It catalyses the reaction sn-glycerol 1-phosphate + (2E,6E,10E)-geranylgeranyl diphosphate = sn-3-O-(geranylgeranyl)glycerol 1-phosphate + diphosphate. In terms of biological role, prenyltransferase that catalyzes the transfer of the geranylgeranyl moiety of geranylgeranyl diphosphate (GGPP) to the C3 hydroxyl of sn-glycerol-1-phosphate (G1P). The chain is Geranylgeranylglyceryl phosphate synthase from Spirosoma linguale (strain ATCC 33905 / DSM 74 / LMG 10896 / Claus 1).